Reading from the N-terminus, the 435-residue chain is 5-methylthioadenosine/S-adenosylhomocysteine deaminase (435 aa).

The Zn(2+) site is built by His65 and His67. 3 residues coordinate substrate: Glu94, Arg150, and His189. His216 provides a ligand contact to Zn(2+). Residues Glu219 and Asp304 each contribute to the substrate site. Asp304 is a Zn(2+) binding site.

This sequence belongs to the metallo-dependent hydrolases superfamily. MTA/SAH deaminase family. The cofactor is Zn(2+).

It catalyses the reaction S-adenosyl-L-homocysteine + H2O + H(+) = S-inosyl-L-homocysteine + NH4(+). It carries out the reaction S-methyl-5'-thioadenosine + H2O + H(+) = S-methyl-5'-thioinosine + NH4(+). Functionally, catalyzes the deamination of 5-methylthioadenosine and S-adenosyl-L-homocysteine into 5-methylthioinosine and S-inosyl-L-homocysteine, respectively. Is also able to deaminate adenosine. This is 5-methylthioadenosine/S-adenosylhomocysteine deaminase from Bacillus cereus (strain ZK / E33L).